Consider the following 481-residue polypeptide: Matrilin-3 (481 aa).

Positions 1–27 are cleaved as a signal peptide; it reads MLLSAPLRHLPGLLLLLWPLLLLPSLA. The region spanning 78–253 is the VWFA domain; the sequence is DLVFIIDSSR…GVIEKLSARF (176 aa). The residue at position 193 (arginine 193) is an Omega-N-methylarginine. EGF-like domains follow at residues 259-300, 301-342, 343-384, and 385-426; these read ALDQ…KTCS, AIDK…RTCA, ALDK…KTCS, and VRNK…KTCS. 12 disulfide bridges follow: cysteine 263–cysteine 274, cysteine 270–cysteine 284, cysteine 286–cysteine 299, cysteine 305–cysteine 316, cysteine 312–cysteine 326, cysteine 328–cysteine 341, cysteine 347–cysteine 358, cysteine 354–cysteine 368, cysteine 370–cysteine 383, cysteine 389–cysteine 400, cysteine 396–cysteine 410, and cysteine 412–cysteine 425. An N-linked (GlcNAc...) asparagine glycan is attached at asparagine 321. At serine 436 the chain carries Phosphoserine; by FAM20C. Positions 451-475 form a coiled coil; sequence EKVSSHLQKLNTKLDNILKKLKVTE.

As to quaternary structure, can form homooligomers (monomers, dimers, trimers and tetramers) and heterooligomers with matrilin-1. Interacts with COMP. Component of a complex containing at least CRELD2, MANF, MATN3 and PDIA4. As to expression, strongly expressed in growing skeletal tissue such as epiphyseal growth plate or in bone undergoing growth and remodeling. In the bone, actively synthesized in osteoblasts and osteocytes. Expressed in cartilage of sternum, femur, vertebrae, trachea, articular and epiphyseal cartilage, cartilage of developing bones and bones.

It is found in the secreted. Its function is as follows. Major component of the extracellular matrix of cartilage and may play a role in the formation of extracellular filamentous networks. The polypeptide is Matrilin-3 (Matn3) (Mus musculus (Mouse)).